The primary structure comprises 152 residues: Xanthine-guanine phosphoribosyltransferase (152 aa).

Residues 37-38 (RG), Arg69, and 88-96 (DDLVDTGGT) contribute to the 5-phospho-alpha-D-ribose 1-diphosphate site. Arg69 serves as a coordination point for GMP. Residue Asp89 coordinates Mg(2+). The guanine site is built by Asp92 and Ile135. Residues Asp92 and Ile135 each coordinate xanthine. Residues 92–96 (DTGGT) and 134–135 (WI) contribute to the GMP site.

Belongs to the purine/pyrimidine phosphoribosyltransferase family. XGPT subfamily. Homotetramer. Mg(2+) serves as cofactor.

It is found in the cell inner membrane. It carries out the reaction GMP + diphosphate = guanine + 5-phospho-alpha-D-ribose 1-diphosphate. It catalyses the reaction XMP + diphosphate = xanthine + 5-phospho-alpha-D-ribose 1-diphosphate. The enzyme catalyses IMP + diphosphate = hypoxanthine + 5-phospho-alpha-D-ribose 1-diphosphate. It functions in the pathway purine metabolism; GMP biosynthesis via salvage pathway; GMP from guanine: step 1/1. Its pathway is purine metabolism; XMP biosynthesis via salvage pathway; XMP from xanthine: step 1/1. Functionally, purine salvage pathway enzyme that catalyzes the transfer of the ribosyl-5-phosphate group from 5-phospho-alpha-D-ribose 1-diphosphate (PRPP) to the N9 position of the 6-oxopurines guanine and xanthine to form the corresponding ribonucleotides GMP (guanosine 5'-monophosphate) and XMP (xanthosine 5'-monophosphate), with the release of PPi. To a lesser extent, also acts on hypoxanthine. The protein is Xanthine-guanine phosphoribosyltransferase of Escherichia fergusonii (strain ATCC 35469 / DSM 13698 / CCUG 18766 / IAM 14443 / JCM 21226 / LMG 7866 / NBRC 102419 / NCTC 12128 / CDC 0568-73).